The primary structure comprises 243 residues: Probable transcriptional regulatory protein BH0025 (243 aa).

It belongs to the TACO1 family.

The protein localises to the cytoplasm. This is Probable transcriptional regulatory protein BH0025 from Borrelia hermsii (strain HS1 / DAH).